The primary structure comprises 162 residues: Protein FAM167B (162 aa).

The protein belongs to the FAM167 (SEC) family.

The polypeptide is Protein FAM167B (Fam167b) (Mus musculus (Mouse)).